Reading from the N-terminus, the 265-residue chain is Apolipoprotein A-I (265 aa).

Positions 1–18 are cleaved as a signal peptide; the sequence is MKAVVLAVAALFLAGGEA. Repeat copies occupy residues 68–89 and 90–111. The 10 X approximate tandem repeats stretch occupies residues 68 to 265; sequence LKLTENLDTL…EEASKKLSSQ (198 aa). Methionine sulfoxide is present on Met-110. The stretch at 112–122 is one 3; half-length repeat; that stretch reads KDLADMKQKVQ. 3 consecutive repeat copies span residues 123–144, 145–166, and 167–188. The 7; truncated repeat unit spans residues 189 to 208; that stretch reads PYSEQMRERLAERLAALRDS. Met-194 is subject to Methionine sulfoxide. Copy 8 of the repeat occupies 209–230; that stretch reads PSLAEYQAKAHEHLKTLHEKAQ. The stretch at 231 to 241 is one 9; half-length repeat; the sequence is PALSDLGQGVL. Residues 242–265 form repeat 10; that stretch reads PVLESLKATLVGAIEEASKKLSSQ.

This sequence belongs to the apolipoprotein A1/A4/E family. As to quaternary structure, homodimer. Interacts with APOA1BP and CLU. Component of a sperm activating protein complex (SPAP), consisting of APOA1, an immunoglobulin heavy chain, an immunoglobulin light chain and albumin. Interacts with NDRG1. Interacts with SCGB3A2. Interacts with NAXE and YJEFN3. In terms of processing, glycosylated. Post-translationally, palmitoylated. Phosphorylation sites are present in the extracellular medium.

Its subcellular location is the secreted. Participates in the reverse transport of cholesterol from tissues to the liver for excretion by promoting cholesterol efflux from tissues and by acting as a cofactor for the lecithin cholesterol acyltransferase (LCAT). As part of the SPAP complex, activates spermatozoa motility. The chain is Apolipoprotein A-I (Apoa1) from Dipodomys ordii (Ord's kangaroo rat).